Consider the following 479-residue polypeptide: Phosphoglycerate kinase, glycosomal (479 aa).

V23, D24, F25, N26, R39, S61, H62, G64, R65, R132, H168, and R169 together coordinate (2R)-3-phosphoglycerate. Residues G214 and A215 each contribute to the ADP site. A CDP-binding site is contributed by G214. A215 and K216 together coordinate AMP. A215 lines the ATP pocket. A215 is a Mg(2+) binding site. Residue K216 coordinates (2R)-3-phosphoglycerate. CDP is bound at residue D219. D219 contributes to the Mg(2+) binding site. 2 residues coordinate ADP: K220 and G238. Position 220 (K220) interacts with AMP. Residue K220 coordinates ATP. G238 lines the CDP pocket. AMP-binding residues include A239 and A311. The ATP site is built by A239 and A311. The ADP site is built by A311 and N335. G336 and F341 together coordinate CDP. 4 residues coordinate ADP: F341, E342, D374, and S375. AMP is bound at residue E342. The ATP site is built by E342, D374, and S375. D374 contributes to the Mg(2+) binding site.

It belongs to the phosphoglycerate kinase family. Monomer. Mg(2+) is required as a cofactor.

It localises to the glycosome. It carries out the reaction (2R)-3-phosphoglycerate + ATP = (2R)-3-phospho-glyceroyl phosphate + ADP. The protein operates within carbohydrate degradation; glycolysis; pyruvate from D-glyceraldehyde 3-phosphate: step 2/5. This chain is Phosphoglycerate kinase, glycosomal (PGKC), found in Leishmania major.